The following is a 67-amino-acid chain: DNA-directed RNA polymerase subunit omega (67 aa).

This sequence belongs to the RNA polymerase subunit omega family. As to quaternary structure, the RNAP catalytic core consists of 2 alpha, 1 beta, 1 beta' and 1 omega subunit. When a sigma factor is associated with the core the holoenzyme is formed, which can initiate transcription.

The catalysed reaction is RNA(n) + a ribonucleoside 5'-triphosphate = RNA(n+1) + diphosphate. Functionally, promotes RNA polymerase assembly. Latches the N- and C-terminal regions of the beta' subunit thereby facilitating its interaction with the beta and alpha subunits. The chain is DNA-directed RNA polymerase subunit omega from Variovorax paradoxus (strain S110).